A 228-amino-acid polypeptide reads, in one-letter code: 5'-methylthioadenosine/S-adenosylhomocysteine nucleosidase (228 aa).

Glutamate 11 acts as the Proton acceptor in catalysis. Residues glycine 77, isoleucine 151, and methionine 172 to glutamate 173 each bind substrate. The active-site Proton donor is aspartate 196.

Belongs to the PNP/UDP phosphorylase family. MtnN subfamily.

The catalysed reaction is S-adenosyl-L-homocysteine + H2O = S-(5-deoxy-D-ribos-5-yl)-L-homocysteine + adenine. It catalyses the reaction S-methyl-5'-thioadenosine + H2O = 5-(methylsulfanyl)-D-ribose + adenine. It carries out the reaction 5'-deoxyadenosine + H2O = 5-deoxy-D-ribose + adenine. It functions in the pathway amino-acid biosynthesis; L-methionine biosynthesis via salvage pathway; S-methyl-5-thio-alpha-D-ribose 1-phosphate from S-methyl-5'-thioadenosine (hydrolase route): step 1/2. Its function is as follows. Catalyzes the irreversible cleavage of the glycosidic bond in both 5'-methylthioadenosine (MTA) and S-adenosylhomocysteine (SAH/AdoHcy) to adenine and the corresponding thioribose, 5'-methylthioribose and S-ribosylhomocysteine, respectively. Also cleaves 5'-deoxyadenosine, a toxic by-product of radical S-adenosylmethionine (SAM) enzymes, into 5-deoxyribose and adenine. The protein is 5'-methylthioadenosine/S-adenosylhomocysteine nucleosidase of Staphylococcus aureus (strain JH1).